A 285-amino-acid chain; its full sequence is Cold sensitive U2 snRNA suppressor 2 (285 aa).

The RRM 1 domain occupies 45-130 (TSIYISGLPT…KQIRVERAQF (86 aa)). Positions 135-149 (GDNMHGKENDLKEFN) are enriched in basic and acidic residues. Positions 135–154 (GDNMHGKENDLKEFNGPEPP) are disordered. The residue at position 163 (Ser-163) is a Phosphoserine. The 83-residue stretch at 183-265 (RTVIFANVFN…QKLLAFISGD (83 aa)) folds into the RRM 2 domain. A disordered region spans residues 265 to 285 (DENTSSTSDKNEDSEVEDDLI). Over residues 276–285 (EDSEVEDDLI) the composition is skewed to acidic residues.

This sequence belongs to the HTATSF1 family. In terms of assembly, interacts with PRP11. Associates with the U2 snRNA.

In terms of biological role, U2 snRNP protein which helps to refold U2 into a structure favorable for its binding to SF3b and SF3a prior to spliceosome assembly. Mediates functional interactions between U2 RNA and PRP5. Enforces ATP dependence during formation of the prespliceosome by brokering an interaction between PRP5 and the U2 snRNP that depends on correct U2 RNA structure. The protein is Cold sensitive U2 snRNA suppressor 2 (CUS2) of Saccharomyces cerevisiae (strain ATCC 204508 / S288c) (Baker's yeast).